Here is a 184-residue protein sequence, read N- to C-terminus: Peptide deformylase (184 aa).

Fe cation is bound by residues Cys-111 and His-154. Residue Glu-155 is part of the active site. Residue His-158 coordinates Fe cation.

Belongs to the polypeptide deformylase family. The cofactor is Fe(2+).

It carries out the reaction N-terminal N-formyl-L-methionyl-[peptide] + H2O = N-terminal L-methionyl-[peptide] + formate. Removes the formyl group from the N-terminal Met of newly synthesized proteins. Requires at least a dipeptide for an efficient rate of reaction. N-terminal L-methionine is a prerequisite for activity but the enzyme has broad specificity at other positions. The protein is Peptide deformylase of Lactobacillus gasseri (strain ATCC 33323 / DSM 20243 / BCRC 14619 / CIP 102991 / JCM 1131 / KCTC 3163 / NCIMB 11718 / NCTC 13722 / AM63).